The primary structure comprises 185 residues: Ribosome-recycling factor (185 aa).

It belongs to the RRF family.

Its subcellular location is the cytoplasm. Functionally, responsible for the release of ribosomes from messenger RNA at the termination of protein biosynthesis. May increase the efficiency of translation by recycling ribosomes from one round of translation to another. The protein is Ribosome-recycling factor of Corynebacterium aurimucosum (strain ATCC 700975 / DSM 44827 / CIP 107346 / CN-1) (Corynebacterium nigricans).